Reading from the N-terminus, the 375-residue chain is Queuine tRNA-ribosyltransferase (375 aa).

Residue Asp-90 is the Proton acceptor of the active site. Substrate is bound by residues 90-94, Asp-144, Gln-190, and Gly-217; that span reads DSGGF. Residues 248–254 are RNA binding; that stretch reads GIGTPHY. The active-site Nucleophile is the Asp-267. The RNA binding; important for wobble base 34 recognition stretch occupies residues 272 to 276; it reads TRIAR. The Zn(2+) site is built by Cys-305, Cys-307, Cys-310, and His-336.

This sequence belongs to the queuine tRNA-ribosyltransferase family. Homodimer. Within each dimer, one monomer is responsible for RNA recognition and catalysis, while the other monomer binds to the replacement base PreQ1. Zn(2+) is required as a cofactor.

It carries out the reaction 7-aminomethyl-7-carbaguanine + guanosine(34) in tRNA = 7-aminomethyl-7-carbaguanosine(34) in tRNA + guanine. Its pathway is tRNA modification; tRNA-queuosine biosynthesis. Functionally, catalyzes the base-exchange of a guanine (G) residue with the queuine precursor 7-aminomethyl-7-deazaguanine (PreQ1) at position 34 (anticodon wobble position) in tRNAs with GU(N) anticodons (tRNA-Asp, -Asn, -His and -Tyr). Catalysis occurs through a double-displacement mechanism. The nucleophile active site attacks the C1' of nucleotide 34 to detach the guanine base from the RNA, forming a covalent enzyme-RNA intermediate. The proton acceptor active site deprotonates the incoming PreQ1, allowing a nucleophilic attack on the C1' of the ribose to form the product. After dissociation, two additional enzymatic reactions on the tRNA convert PreQ1 to queuine (Q), resulting in the hypermodified nucleoside queuosine (7-(((4,5-cis-dihydroxy-2-cyclopenten-1-yl)amino)methyl)-7-deazaguanosine). The polypeptide is Queuine tRNA-ribosyltransferase (Borrelia recurrentis (strain A1)).